Consider the following 239-residue polypeptide: ATP-dependent dethiobiotin synthetase BioD (239 aa).

22–27 (GIGKTV) contributes to the ATP binding site. Residue Thr26 coordinates Mg(2+). Residue Lys47 is part of the active site. Substrate is bound at residue Thr51. ATP is bound by residues Asp59, 124-127 (EGVG), and 184-185 (NR). Residues Asp59 and Glu124 each coordinate Mg(2+).

It belongs to the dethiobiotin synthetase family. In terms of assembly, homodimer. Mg(2+) is required as a cofactor.

It localises to the cytoplasm. The enzyme catalyses (7R,8S)-7,8-diammoniononanoate + CO2 + ATP = (4R,5S)-dethiobiotin + ADP + phosphate + 3 H(+). It functions in the pathway cofactor biosynthesis; biotin biosynthesis; biotin from 7,8-diaminononanoate: step 1/2. In terms of biological role, catalyzes a mechanistically unusual reaction, the ATP-dependent insertion of CO2 between the N7 and N8 nitrogen atoms of 7,8-diaminopelargonic acid (DAPA, also called 7,8-diammoniononanoate) to form a ureido ring. The protein is ATP-dependent dethiobiotin synthetase BioD of Chlorobaculum tepidum (strain ATCC 49652 / DSM 12025 / NBRC 103806 / TLS) (Chlorobium tepidum).